A 73-amino-acid polypeptide reads, in one-letter code: Small ribosomal subunit protein bS18B (73 aa).

It belongs to the bacterial ribosomal protein bS18 family. Part of the 30S ribosomal subunit. Forms a tight heterodimer with protein bS6.

Its function is as follows. Binds as a heterodimer with protein bS6 to the central domain of the 16S rRNA, where it helps stabilize the platform of the 30S subunit. In Frankia alni (strain DSM 45986 / CECT 9034 / ACN14a), this protein is Small ribosomal subunit protein bS18B.